We begin with the raw amino-acid sequence, 144 residues long: Glutaredoxin-C6 (144 aa).

Residues 39–143 (EAKIRRLISE…PKLVQVGALW (105 aa)) form the Glutaredoxin domain. A disulfide bond links Cys59 and Cys62.

Belongs to the glutaredoxin family. CC-type subfamily.

The protein resides in the cytoplasm. Its function is as follows. Has a glutathione-disulfide oxidoreductase activity in the presence of NADPH and glutathione reductase. Reduces low molecular weight disulfides and proteins. In Arabidopsis thaliana (Mouse-ear cress), this protein is Glutaredoxin-C6 (GRXC6).